The sequence spans 57 residues: Metallothionein (57 aa).

This sequence belongs to the metallothionein superfamily. Type 14 family.

In terms of biological role, this protein complexes cadmium, zinc and copper. This Thermostichus vulcanus (Synechococcus vulcanus) protein is Metallothionein (mtnA).